Consider the following 207-residue polypeptide: Dephospho-CoA kinase (207 aa).

The 203-residue stretch at 5–207 (IVGLTGGIAS…AALQTHRIEN (203 aa)) folds into the DPCK domain. 13-18 (ASGKSA) is a binding site for ATP.

This sequence belongs to the CoaE family.

The protein localises to the cytoplasm. It carries out the reaction 3'-dephospho-CoA + ATP = ADP + CoA + H(+). Its pathway is cofactor biosynthesis; coenzyme A biosynthesis; CoA from (R)-pantothenate: step 5/5. Its function is as follows. Catalyzes the phosphorylation of the 3'-hydroxyl group of dephosphocoenzyme A to form coenzyme A. The polypeptide is Dephospho-CoA kinase (Xanthomonas campestris pv. campestris (strain ATCC 33913 / DSM 3586 / NCPPB 528 / LMG 568 / P 25)).